The following is a 302-amino-acid chain: MKTGSEFHVGIVGLGSMGMGAALSYVRAGLSTWGADLNSNACATLKEAGACGVSDNAATFAEKLDALLVLVVNAAQVKQVLFGETGVAQHLKPGTAVMVSSTIASADAQEIATALAGFDLEMLDAPVSGGAVKAANGEMTVMASGSDIAFERLAPVLEAVAGKVYRIGAEPGLGSTVKIIHQLLAGVHIAAGAEAMALAARAGIPLDVMYDVVTNAAGNSWMFENRMRHVVDGDYTPHSAVDIFVKDLGLVADTAKALHFPLPLASTALNMFTSASNAGYGKEDDSAVIKIFSGITLPGAKS.

Residues 7 to 35 (FHVG…TWGA) and Thr-102 contribute to the NAD(+) site. The active site involves Lys-178. Position 246 (Lys-246) interacts with NAD(+).

Belongs to the HIBADH-related family. L-threonate dehydrogenase subfamily.

It catalyses the reaction L-threonate + NAD(+) = 2-dehydro-L-erythronate + NADH + H(+). Its function is as follows. Catalyzes oxidation of L-threonate to 2-oxo-tetronate. Can use either NAD(+) or NADP(+) as cosubstrate, with a preference for NAD(+). This Escherichia coli (strain K12) protein is L-threonate dehydrogenase.